The sequence spans 382 residues: Chaperone protein DnaJ (382 aa).

Positions 4–69 (DYYEVLGVSR…DKRRRYDQFG (66 aa)) constitute a J domain. The CR-type zinc-finger motif lies at 138–219 (GVEKTIKIKK…CYGEGIKQGE (82 aa)). Zn(2+) contacts are provided by Cys-151, Cys-154, Cys-167, Cys-170, Cys-193, Cys-196, Cys-207, and Cys-210. 4 CXXCXGXG motif repeats span residues 151–158 (CKECNGSG), 167–174 (CPTCHGAG), 193–200 (CPTCGGEG), and 207–214 (CPSCYGEG).

Belongs to the DnaJ family. Homodimer. The cofactor is Zn(2+).

The protein localises to the cytoplasm. Its function is as follows. Participates actively in the response to hyperosmotic and heat shock by preventing the aggregation of stress-denatured proteins and by disaggregating proteins, also in an autonomous, DnaK-independent fashion. Unfolded proteins bind initially to DnaJ; upon interaction with the DnaJ-bound protein, DnaK hydrolyzes its bound ATP, resulting in the formation of a stable complex. GrpE releases ADP from DnaK; ATP binding to DnaK triggers the release of the substrate protein, thus completing the reaction cycle. Several rounds of ATP-dependent interactions between DnaJ, DnaK and GrpE are required for fully efficient folding. Also involved, together with DnaK and GrpE, in the DNA replication of plasmids through activation of initiation proteins. The sequence is that of Chaperone protein DnaJ from Chlorobium luteolum (strain DSM 273 / BCRC 81028 / 2530) (Pelodictyon luteolum).